The chain runs to 215 residues: FBD domain-containing protein At3g58975 (215 aa).

One can recognise an FBD domain in the interval 122–199 (RSLTSCPVKK…KLSSCNVQLL (78 aa)).

The protein is FBD domain-containing protein At3g58975 of Arabidopsis thaliana (Mouse-ear cress).